The sequence spans 303 residues: MSFTTKVKEELIHLSTGDNNELAAIIKLSGSLGLAHQSLHLSITTENAKIARYIYSFIEDAYVIVPEIRYHQKTNLRKNRVYTVYVEQGVETILADLKLADSFFGLETGIEPQVLSDDNAGRSYLKGAFLAAGSIRDPESGKYQLEIYSVYLDHAQDLAQLMQKFMLDAKTIEHKSGAVTYLQKAEDIMDFLIIIGAMSCKEDFEAIKLLREARNDINRANNAETANIAKTISASMKTINNIIKIMDTIGLESLPIELQQVAQLRVKHPDYSIQQVADALEFPITKSGVNHRLRKINKIADDL.

The H-T-H motif DNA-binding region spans 272–303; sequence SIQQVADALEFPITKSGVNHRLRKINKIADDL.

It belongs to the WhiA family.

Its function is as follows. Involved in cell division and chromosome segregation. This chain is Probable cell division protein WhiA, found in Streptococcus pyogenes serotype M3 (strain ATCC BAA-595 / MGAS315).